The primary structure comprises 368 residues: Quinolinate synthase (368 aa).

Iminosuccinate is bound by residues His-46 and Ser-63. A [4Fe-4S] cluster-binding site is contributed by Cys-110. Iminosuccinate is bound by residues 141-143 (YVN) and Ser-162. Cys-230 is a [4Fe-4S] cluster binding site. Residues 256–258 (HPE) and Thr-273 each bind iminosuccinate. Cys-320 provides a ligand contact to [4Fe-4S] cluster.

Belongs to the quinolinate synthase family. Type 3 subfamily. Homotrimer. It depends on [4Fe-4S] cluster as a cofactor.

Its subcellular location is the cytoplasm. The catalysed reaction is iminosuccinate + dihydroxyacetone phosphate = quinolinate + phosphate + 2 H2O + H(+). The protein operates within cofactor biosynthesis; NAD(+) biosynthesis; quinolinate from iminoaspartate: step 1/1. In terms of biological role, catalyzes the condensation of iminoaspartate with dihydroxyacetone phosphate to form quinolinate. The sequence is that of Quinolinate synthase from Bacillus subtilis (strain 168).